The sequence spans 151 residues: Putative pre-16S rRNA nuclease (151 aa).

This sequence belongs to the YqgF nuclease family.

It localises to the cytoplasm. Its function is as follows. Could be a nuclease involved in processing of the 5'-end of pre-16S rRNA. The polypeptide is Putative pre-16S rRNA nuclease (Prochlorococcus marinus subsp. pastoris (strain CCMP1986 / NIES-2087 / MED4)).